Reading from the N-terminus, the 137-residue chain is DNA polymerase III subunit psi (137 aa).

It belongs to the DNA polymerase III psi/HolD chain family. As to quaternary structure, the DNA polymerase III holoenzyme complex contains at least 10 different subunits organized into 3 functionally essential subassemblies: the Pol III core, the beta sliding clamp processivity factor and the clamp-loading complex. The Pol III core (subunits alpha, epsilon and theta) contains the polymerase and the 3'-5' exonuclease proofreading activities. The polymerase is tethered to the template via the dimeric beta sliding clamp processivity factor. The clamp-loading complex (also called gamma complex) assembles the beta sliding clamp onto the primed template and plays a central role in the organization and communication at the replication fork. The clamp-loading complex contains delta, delta', psi and chi, and 3 copies of either or both of two different DnaX proteins, gamma and tau. The DNA replisome complex has a single clamp loader (3 tau and 1 each of delta, delta', psi and chi subunits) which binds 3 Pol III cores (1 core on the leading strand and 2 on the lagging strand) each with a beta sliding clamp dimer. Additional proteins in the replisome are other copies of gamma, psi (this protein) and chi (holC), SSB, DNA helicase and RNA primase. The clamp loader hydrolyzes ATP to assemble the beta processivity factor onto the primed template and plays a central role in the organization and communication at the replication fork. Interacts directly with the chi subunit (holC).

It catalyses the reaction DNA(n) + a 2'-deoxyribonucleoside 5'-triphosphate = DNA(n+1) + diphosphate. Functionally, part of the beta sliding clamp loading complex, which hydrolyzes ATP to load the beta clamp onto primed DNA to form the DNA replication pre-initiation complex. DNA polymerase III is a complex, multichain enzyme responsible for most of the replicative synthesis in bacteria. This DNA polymerase also exhibits 3' to 5' exonuclease activity. The polypeptide is DNA polymerase III subunit psi (Escherichia coli (strain K12)).